Reading from the N-terminus, the 347-residue chain is NADH-ubiquinone oxidoreductase chain 2 (347 aa).

A run of 9 helical transmembrane segments spans residues I5 to I22, W26 to M45, F60 to L80, N150 to L170, I178 to P198, L200 to M220, S242 to P262, N274 to M294, and T324 to L344.

It belongs to the complex I subunit 2 family. As to quaternary structure, core subunit of respiratory chain NADH dehydrogenase (Complex I) which is composed of 45 different subunits. Interacts with TMEM242.

It is found in the mitochondrion inner membrane. It catalyses the reaction a ubiquinone + NADH + 5 H(+)(in) = a ubiquinol + NAD(+) + 4 H(+)(out). Core subunit of the mitochondrial membrane respiratory chain NADH dehydrogenase (Complex I) which catalyzes electron transfer from NADH through the respiratory chain, using ubiquinone as an electron acceptor. Essential for the catalytic activity and assembly of complex I. This is NADH-ubiquinone oxidoreductase chain 2 from Martes flavigula (Yellow-throated marten).